The following is a 303-amino-acid chain: MSWQQSLTDDRARQIRELVSAASAADGVAPVGDQVLRALAHDRTRHLVAVEDDGAGSRVRGYLNLAPADDDAPPMAEVVVHPDARRRGTGSAMIRAALAEGGPQTRVWAHGNLVAARATAEALGLTAVRELLQMQRPLADLPPQTTAQRVRFATYSGPHDDAEVLRVNNAAFSWHPEQGGWTDADIAERRGEPWFDPAGFFLAFDEDTGALLGFHWTKVHSESLGEVYVVGVDPAAQGRGLGAALTLLGLHHLESRLTGDGRVADVMLYVEADNTAAVKTYRRLGFDIVNTDVAYAAVAPTDV.

A 1D-myo-inositol 2-(L-cysteinylamino)-2-deoxy-alpha-D-glucopyranoside-binding site is contributed by Asp33. Acetyl-CoA-binding positions include 78–80 (VVV) and 86–91 (RRGTGS). Residues 150–303 (VRFATYSGPH…AYAAVAPTDV (154 aa)) enclose the N-acetyltransferase domain. The 1D-myo-inositol 2-(L-cysteinylamino)-2-deoxy-alpha-D-glucopyranoside site is built by Glu177, Lys218, and Glu226. An acetyl-CoA-binding site is contributed by 230–232 (VGV). Tyr269 contacts 1D-myo-inositol 2-(L-cysteinylamino)-2-deoxy-alpha-D-glucopyranoside. 274 to 279 (NTAAVK) is an acetyl-CoA binding site.

It belongs to the acetyltransferase family. MshD subfamily. As to quaternary structure, monomer.

The enzyme catalyses 1D-myo-inositol 2-(L-cysteinylamino)-2-deoxy-alpha-D-glucopyranoside + acetyl-CoA = mycothiol + CoA + H(+). Functionally, catalyzes the transfer of acetyl from acetyl-CoA to desacetylmycothiol (Cys-GlcN-Ins) to form mycothiol. In Mycolicibacterium gilvum (strain PYR-GCK) (Mycobacterium gilvum (strain PYR-GCK)), this protein is Mycothiol acetyltransferase.